The chain runs to 103 residues: MMSEKFALVLLVACIAFIGIETSPINSDSWKDGFCGENEAYDSMRRGCEKRCDDHNPTFCFKFTTVCWCEKGYVRDKSDTCIKVEDCPNVSENLEFSETIIGM.

Residues 1–22 (MMSEKFALVLLVACIAFIGIET) form the signal peptide. Positions 35–87 (CGENEAYDSMRRGCEKRCDDHNPTFCFKFTTVCWCEKGYVRDKSDTCIKVEDC) constitute a TIL domain.

Belongs to the polydnaviridae EGF-like motif protein family.

This is Probable protease inhibitor Egf0.4a (O4) from Microplitis demolitor (Parasitoid wasp).